Consider the following 130-residue polypeptide: Seminal plasma protein pB1 (130 aa).

The N-terminal stretch at 1 to 25 (MAPRLGIFLLWAGVSVFLPLDPVNG) is a signal peptide. 2 consecutive Fibronectin type-II domains span residues 39-83 (TSDD…YCRS) and 84-130 (TDYA…WRYC). 4 disulfide bridges follow: Cys-44-Cys-68, Cys-58-Cys-81, Cys-89-Cys-115, and Cys-103-Cys-130.

It belongs to the seminal plasma protein family. As to expression, component of seminal plasma.

The protein resides in the secreted. May form a complex with spermadhesin AQN-1 which possesses phosphorylcholine-binding activity. This is Seminal plasma protein pB1 from Sus scrofa (Pig).